The chain runs to 207 residues: Urease accessory protein UreE (207 aa).

The span at 170 to 194 shows a compositional bias: basic and acidic residues; the sequence is EHHGHSHSHSHDHDHDHDHDHDHQH. A disordered region spans residues 170 to 207; sequence EHHGHSHSHSHDHDHDHDHDHDHQHGPCCSHGHHHGHR.

The protein belongs to the UreE family.

It localises to the cytoplasm. Its function is as follows. Involved in urease metallocenter assembly. Binds nickel. Probably functions as a nickel donor during metallocenter assembly. This Burkholderia pseudomallei (strain 1106a) protein is Urease accessory protein UreE.